The sequence spans 185 residues: Ribosome-recycling factor (185 aa).

The protein belongs to the RRF family.

It is found in the cytoplasm. Functionally, responsible for the release of ribosomes from messenger RNA at the termination of protein biosynthesis. May increase the efficiency of translation by recycling ribosomes from one round of translation to another. In Mycobacteroides abscessus (strain ATCC 19977 / DSM 44196 / CCUG 20993 / CIP 104536 / JCM 13569 / NCTC 13031 / TMC 1543 / L948) (Mycobacterium abscessus), this protein is Ribosome-recycling factor.